The sequence spans 250 residues: Probable transcriptional regulatory protein Lferr_0060 (250 aa).

The protein belongs to the TACO1 family.

It localises to the cytoplasm. The sequence is that of Probable transcriptional regulatory protein Lferr_0060 from Acidithiobacillus ferrooxidans (strain ATCC 53993 / BNL-5-31) (Leptospirillum ferrooxidans (ATCC 53993)).